The sequence spans 406 residues: UPF0754 membrane protein Cyan7425_4067 (406 aa).

Residues 381–401 traverse the membrane as a helical segment; that stretch reads IVTLGGVLGLLIGIAQSVLLL.

It belongs to the UPF0754 family.

The protein resides in the cell inner membrane. This chain is UPF0754 membrane protein Cyan7425_4067, found in Cyanothece sp. (strain PCC 7425 / ATCC 29141).